The chain runs to 353 residues: Mitochondrial import inner membrane translocase subunit TIM50 (353 aa).

A mitochondrion-targeting transit peptide spans 1 to 44 (MAASAAVFSRLRSGLRLGSRGLCTRLATPPRRAPDQAAEIGSRG). Residues 25–60 (RLATPPRRAPDQAAEIGSRGSTKAQGPQQQPGSEGP) are disordered. Phosphoserine is present on Ser45. At 45 to 65 (STKAQGPQQQPGSEGPSYAKK) the chain is on the mitochondrial matrix side. Residues 49–60 (QGPQQQPGSEGP) show a composition bias toward low complexity. A helical transmembrane segment spans residues 66-86 (VALWLAGLLGAGGTVSVVYIF). Residues 87–353 (GNNPVDENGA…SRLWPRSKQP (267 aa)) lie on the Mitochondrial intermembrane side of the membrane. Residues 143-286 (YYQPPYTLVL…LDLSAFLKTI (144 aa)) enclose the FCP1 homology domain. The residue at position 341 (Ser341) is a Phosphoserine.

It belongs to the TIM50 family. Component of the TIM23 complex at least composed of TIMM23, TIMM17 (TIMM17A or TIMM17B) and TIMM50; within this complex, directly interacts with TIMM23. The complex interacts with the TIMM44 component of the PAM complex and with DNAJC15. As to quaternary structure, interacts with COIL and snRNPs. Widely expressed. Expressed at higher level in brain, kidney and liver (at protein level).

It localises to the mitochondrion inner membrane. It is found in the nucleus speckle. Its function is as follows. Essential component of the TIM23 complex, a complex that mediates the translocation of transit peptide-containing proteins across the mitochondrial inner membrane. Has some phosphatase activity in vitro; however such activity may not be relevant in vivo. May participate in the release of snRNPs and SMN from the Cajal body. This Homo sapiens (Human) protein is Mitochondrial import inner membrane translocase subunit TIM50 (TIMM50).